The sequence spans 214 residues: Ribosomal RNA small subunit methyltransferase G (214 aa).

Residues G81, M86, 132-133 (VE), and R147 contribute to the S-adenosyl-L-methionine site.

The protein belongs to the methyltransferase superfamily. RNA methyltransferase RsmG family.

It is found in the cytoplasm. It catalyses the reaction guanosine(527) in 16S rRNA + S-adenosyl-L-methionine = N(7)-methylguanosine(527) in 16S rRNA + S-adenosyl-L-homocysteine. In terms of biological role, specifically methylates the N7 position of guanine in position 527 of 16S rRNA. The protein is Ribosomal RNA small subunit methyltransferase G of Pseudomonas fluorescens (strain Pf0-1).